The chain runs to 752 residues: Lid2 complex component jmj3 (752 aa).

The JmjN domain maps to 34 to 75; that stretch reads IPVVEPKISEFVDMESFIRRVERLGKKYGAIKVVRPSSVLNP. The JmjC domain occupies 162 to 333; sequence YTNRPSIPFY…NYEFSNLRRL (172 aa). Polar residues-rich tracts occupy residues 391–402 and 409–423; these read SFSQRDFDSPNS and LMSN…HFNS. The interval 391 to 438 is disordered; that stretch reads SFSQRDFDSPNSINPPSPLMSNHESASTEHFNSTTTTEKELSSLHVGE. Basic and acidic residues predominate over residues 427-438; the sequence is TEKELSSLHVGE.

In terms of assembly, component of the Lid2 complex composed of ash2, jmj3, lid2, sdc1 and snt2.

It localises to the nucleus. This Schizosaccharomyces pombe (strain 972 / ATCC 24843) (Fission yeast) protein is Lid2 complex component jmj3.